A 363-amino-acid polypeptide reads, in one-letter code: Type-2 angiotensin II receptor (363 aa).

Residues 1–45 are Extracellular-facing; it reads MKGNSTLATTSKNITSGLHFGLVNISGNNESTLNCSQKPSDKHLD. N-linked (GlcNAc...) asparagine glycans are attached at residues Asn4, Asn13, Asn24, Asn29, and Asn34. Cystine bridges form between Cys35-Cys290 and Cys117-Cys195. Residues 46–70 traverse the membrane as a helical segment; that stretch reads AIPILYYIIFVIGFLVNIVVVTLFC. Topologically, residues 71–80 are cytoplasmic; it reads CQKGPKKVSS. The helical transmembrane segment at 81-104 threads the bilayer; sequence IYIFNLAVADLLLLATLPLWATYY. The angiotensin II site is built by Tyr103 and Tyr104. At 105 to 114 the chain is on the extracellular side; it reads SYRYDWLFGP. The chain crosses the membrane as a helical span at residues 115-140; that stretch reads VMCKVFGSFLTLNMFASIFFITCMSV. Over 141 to 159 the chain is Cytoplasmic; the sequence is DRYQSVIYPFLSQRRNPWQ. Residues 160–181 form a helical membrane-spanning segment; sequence ASYIVPLVWCMACLSSLPTFYF. Angiotensin II-binding residues include Arg182, Tyr204, and Lys215. Residues 182–206 lie on the Extracellular side of the membrane; it reads RDVRTIEYLGVNACIMAFPPEKYAQ. The helical transmembrane segment at 207–232 threads the bilayer; that stretch reads WSAGIALMKNILGFIIPLIFIATCYF. Topologically, residues 233–257 are cytoplasmic; it reads GIRKHLLKTNSYGKNRITRDQVLKM. Residues 258–281 form a helical membrane-spanning segment; that stretch reads AAAVVLAFIICWLPFHVLTFLDAL. Asp279 is a binding site for angiotensin II. Topologically, residues 282–294 are extracellular; sequence AWMGVINSCEVIA. Residues 295–320 form a helical membrane-spanning segment; sequence VIDLALPFAILLGFTNSCVNPFLYCF. Asp297 provides a ligand contact to angiotensin II. The Cytoplasmic portion of the chain corresponds to 321 to 363; it reads VGNRFQQKLRSVFRVPITWLQGKRESMSCRKSSSLREMETFVS. Residues 324–333 form a helix VIII region; the sequence is RFQQKLRSVF.

It belongs to the G-protein coupled receptor 1 family. As to quaternary structure, interacts with MTUS1. In adult, highly expressed in myometrium with lower levels in adrenal gland and fallopian tube. Expressed in the cerebellum. Very highly expressed in fetal kidney and intestine.

It is found in the cell membrane. Functionally, receptor for angiotensin II, a vasoconstricting peptide. Signals primarily via a non-canonical G-protein- and beta-arrestin independent pathways. Cooperates with MTUS1 to inhibit ERK2 activation and cell proliferation. The chain is Type-2 angiotensin II receptor from Homo sapiens (Human).